The primary structure comprises 436 residues: Carboxypeptidase A5 (436 aa).

Residues 1–33 (MQGTPGGGTRPGPSPVDRRTLLVFSFILAAALG) form the signal peptide. A propeptide spans 34–126 (QMNFTGDQVL…ERQAMAKSRR (93 aa)) (activation peptide). The Peptidase M14 domain occupies 138 to 431 (SYHTLEEIYS…MALRTIMEHT (294 aa)). Zn(2+) contacts are provided by His196 and Glu199. Substrate-binding positions include 196–199 (HSRE), Arg254, and 271–272 (NR). The cysteines at positions 265 and 288 are disulfide-linked. His323 provides a ligand contact to Zn(2+). Residues 324-325 (SY) and Tyr375 contribute to the substrate site. Residue Glu397 is the Proton donor/acceptor of the active site.

This sequence belongs to the peptidase M14 family. Requires Zn(2+) as cofactor. As to expression, expression is very low or not detectable.

It is found in the secreted. The polypeptide is Carboxypeptidase A5 (CPA5) (Homo sapiens (Human)).